The primary structure comprises 411 residues: Methylthioribose-1-phosphate isomerase (411 aa).

Residue serine 2 is modified to N-acetylserine. Catalysis depends on aspartate 280, which acts as the Proton donor. Position 351 is a phosphoserine (serine 351).

Belongs to the eIF-2B alpha/beta/delta subunits family. MtnA subfamily. In terms of assembly, homodimer.

It is found in the cytoplasm. The protein localises to the nucleus. It catalyses the reaction 5-(methylsulfanyl)-alpha-D-ribose 1-phosphate = 5-(methylsulfanyl)-D-ribulose 1-phosphate. It participates in amino-acid biosynthesis; L-methionine biosynthesis via salvage pathway; L-methionine from S-methyl-5-thio-alpha-D-ribose 1-phosphate: step 1/6. Its function is as follows. Catalyzes the interconversion of methylthioribose-1-phosphate (MTR-1-P) into methylthioribulose-1-phosphate (MTRu-1-P). The protein is Methylthioribose-1-phosphate isomerase of Saccharomyces cerevisiae (strain RM11-1a) (Baker's yeast).